The primary structure comprises 299 residues: MSLPHLRRLEAEAIHVIREVVATFSNPVVLYSIGKDSSVLLHLAMKAFYPAKPPFPFLHVDTKWKFREMIEFRDRMARELGFDLLVHVNQDGVEQGIGPFTHGSNVHTHVMKTMGLRQALEKYGFDAALAGARRDEEKSRAKERIFSIRSAQHGWDPQRQRPEMWKTYNTRVGQGETMRVFPLSNWTEFDIWQYILREEIPIVPLYFAARRPVVKREGMLIMVDDDRMPIQPEEEVTEQLVRFRTLGCYPLTGAVESDAVTVPEILREMLTVRTSERQSRLIDTDEVGAMEKKKREGYF.

This sequence belongs to the PAPS reductase family. CysD subfamily. Sulfate-activating enzymes, NodP and NodQ, may be physically associated.

It catalyses the reaction sulfate + ATP + H(+) = adenosine 5'-phosphosulfate + diphosphate. Functionally, proposed to provide activated sulfate for transfer to nod factor. In Rhizobium meliloti (strain 1021) (Ensifer meliloti), this protein is Sulfate adenylyltransferase subunit 2 (nodP).